A 202-amino-acid chain; its full sequence is Small ribosomal subunit protein uS4 (202 aa).

Residues 16-43 (GELPGLSRKTPRRAYPPGQHGQGRRKRS) are disordered. The S4 RNA-binding domain occupies 90–152 (MRLDNTVFRL…DNSRRMVETN (63 aa)).

This sequence belongs to the universal ribosomal protein uS4 family. Part of the 30S ribosomal subunit. Contacts protein S5. The interaction surface between S4 and S5 is involved in control of translational fidelity.

In terms of biological role, one of the primary rRNA binding proteins, it binds directly to 16S rRNA where it nucleates assembly of the body of the 30S subunit. Functionally, with S5 and S12 plays an important role in translational accuracy. The chain is Small ribosomal subunit protein uS4 from Crocosphaera subtropica (strain ATCC 51142 / BH68) (Cyanothece sp. (strain ATCC 51142)).